The following is a 198-amino-acid chain: GTP-binding protein Di-Ras1 (198 aa).

Residues 17–22 (GVGKSS), 33–39 (RDTYIPT), 61–65 (DTTGS), 121–125 (NKCDE), Ala151, and 151–152 (AK) contribute to the GTP site. An Effector region motif is present at residues 36-44 (YIPTIEDTY). A compositionally biased stretch (basic and acidic residues) spans 178 to 192 (DGKRSGKQKRTDRVK). The segment at 178–198 (DGKRSGKQKRTDRVKGKCTLM) is disordered. Cys195 is subject to Cysteine methyl ester. Residue Cys195 is the site of S-geranylgeranyl cysteine attachment. A propeptide spans 196–198 (TLM) (removed in mature form).

It belongs to the small GTPase superfamily. Di-Ras family. As to expression, highly expressed in heart and brain.

It is found in the cell membrane. Its function is as follows. Displays low GTPase activity and exists predominantly in the GTP-bound form. The protein is GTP-binding protein Di-Ras1 (DIRAS1) of Homo sapiens (Human).